Reading from the N-terminus, the 471-residue chain is UDP-N-acetylmuramate--L-alanine ligase (471 aa).

114 to 120 is a binding site for ATP; the sequence is GTHGKTT.

The protein belongs to the MurCDEF family.

The protein localises to the cytoplasm. The enzyme catalyses UDP-N-acetyl-alpha-D-muramate + L-alanine + ATP = UDP-N-acetyl-alpha-D-muramoyl-L-alanine + ADP + phosphate + H(+). The protein operates within cell wall biogenesis; peptidoglycan biosynthesis. In terms of biological role, cell wall formation. In Brucella abortus (strain S19), this protein is UDP-N-acetylmuramate--L-alanine ligase.